We begin with the raw amino-acid sequence, 736 residues long: Factor of DNA methylation 4 (736 aa).

Basic and acidic residues-rich tracts occupy residues 80 to 90 (RKYLRPRERPR) and 144 to 167 (DSGR…SNED). The interval 80–167 (RKYLRPRERP…KPDPFFSNED (88 aa)) is disordered. A coiled-coil region spans residues 360 to 597 (TLVSNLENTL…RSMRELTTRA (238 aa)).

Its function is as follows. Acts in association with FDM3 and FDM5 for RNA-directed DNA methylation (RdDM). The chain is Factor of DNA methylation 4 from Arabidopsis thaliana (Mouse-ear cress).